The chain runs to 505 residues: Protein MGF 505-4R (505 aa).

Belongs to the asfivirus MGF 505 family.

In terms of biological role, plays a role in virus cell tropism, and may be required for efficient virus replication in macrophages. In Ornithodoros (relapsing fever ticks), this protein is Protein MGF 505-4R.